The chain runs to 59 residues: Ribosome modulation factor (59 aa).

It belongs to the ribosome modulation factor family.

It is found in the cytoplasm. During stationary phase, converts 70S ribosomes to an inactive dimeric form (100S ribosomes). This is Ribosome modulation factor from Aeromonas veronii (strain B565).